We begin with the raw amino-acid sequence, 382 residues long: Guanine nucleotide-binding protein G(s) subunit alpha (382 aa).

Over residues 1 to 14 the composition is skewed to polar residues; that stretch reads MGCFGSPTSKQSDV. The segment at 1–31 is disordered; that stretch reads MGCFGSPTSKQSDVNSEDSKSQKRRSDAISR. A lipid anchor (N-palmitoyl glycine) is attached at G2. C3 is lipidated: S-palmitoyl cysteine. Over residues 17 to 31 the composition is skewed to basic and acidic residues; it reads EDSKSQKRRSDAISR. Residues 42–382 enclose the G-alpha domain; that stretch reads ATHRLLLLGA…RMHLRQYELL (341 aa). Positions 45–58 are G1 motif; the sequence is RLLLLGAGESGKST. Residues 50–57, 51–58, 186–192, 211–215, 212–216, 280–283, 281–284, and A354 contribute to the GTP site; these read GAGESGKS, AGESGKST, LRCRVLT, DVGGQ, VGGQR, NKQD, and KQDL. Residues S57 and T192 each coordinate Mg(2+). Residues 184–192 form a G2 motif region; that stretch reads DILRCRVLT. The interval 207–216 is G3 motif; it reads FHMFDVGGQR. The interval 276-283 is G4 motif; it reads ILFLNKQD. The tract at residues 352-357 is G5 motif; sequence TCAVDT.

The protein belongs to the G-alpha family. G(s) subfamily. In terms of assembly, g proteins are composed of 3 units; alpha, beta and gamma. The alpha chain contains the guanine nucleotide binding site.

In terms of biological role, guanine nucleotide-binding proteins (G proteins) are involved as modulators or transducers in various transmembrane signaling systems. The G(s) protein is involved in hormonal regulation of adenylate cyclase: it activates the cyclase. This Drosophila pseudoobscura pseudoobscura (Fruit fly) protein is Guanine nucleotide-binding protein G(s) subunit alpha (G-salpha60A).